Consider the following 296-residue polypeptide: Non-selective voltage-gated ion channel VDAC2 (296 aa).

Lys-25 is an ATP binding site. A Glycyl lysine isopeptide (Lys-Gly) (interchain with G-Cter in ubiquitin) cross-link involves residue Lys-25. Ser-26 is modified (phosphoserine). Position 33 (Lys-33) interacts with ATP. Lys-33 is subject to N6-acetyllysine; alternate. Lys-33 bears the N6-succinyllysine; alternate mark. Residue Lys-33 forms a Glycyl lysine isopeptide (Lys-Gly) (interchain with G-Cter in ubiquitin); alternate linkage. The next 2 membrane-spanning stretches (beta stranded) occupy residues 39–48 (LVKLDVKTKS) and 52–60 (VEFTTSGSS). Glycyl lysine isopeptide (Lys-Gly) (interchain with G-Cter in ubiquitin) cross-links involve residues Lys-66 and Lys-74. The beta stranded transmembrane segment at 67–77 (VNGSLETKYKW) threads the bilayer. Tyr-80 carries the post-translational modification Phosphotyrosine. 3 consecutive transmembrane segments (beta stranded) span residues 82–89 (LTFTEKWN), 93–102 (TLGTEIAIED), and 108–117 (LKLTFDTTFS). The residue at position 120 (Thr-120) is a Phosphothreonine. The residue at position 122 (Lys-122) is an N6-acetyllysine; alternate. A Glycyl lysine isopeptide (Lys-Gly) (interchain with G-Cter in ubiquitin); alternate cross-link involves residue Lys-122. Residue Lys-123 forms a Glycyl lysine isopeptide (Lys-Gly) (interchain with G-Cter in ubiquitin) linkage. Transmembrane regions (beta stranded) follow at residues 124 to 133 (SGKIKSAYKR), 136 to 143 (LNLGCDVD), 150 to 158 (AIHGSAVFG), and 163 to 171 (LAGYQMTFD). Lys-174 is covalently cross-linked (Glycyl lysine isopeptide (Lys-Gly) (interchain with G-Cter in ubiquitin)). 6 consecutive transmembrane segments (beta stranded) span residues 176–188 (KLTRNNFSVGYKT), 191–198 (FQLHTNVN), 202–211 (EFGGSIYQKV), 215–224 (LETAVNLAWT), 231–240 (RFGIAAKYKL), and 244–251 (ASISAKVN). Phosphoserine is present on Ser-206. Ser-253 bears the Phosphoserine mark. Residues 255-257 (LVG) and 273-277 (SALID) each bind NAD(+). 2 beta stranded membrane-spanning segments follow: residues 255–264 (LVGVGYTQTL) and 267–276 (GVKLTLSALI). At Lys-279 the chain carries N6-acetyllysine; alternate. A Glycyl lysine isopeptide (Lys-Gly) (interchain with G-Cter in ubiquitin); alternate cross-link involves residue Lys-279. A beta stranded membrane pass occupies residues 286-295 (HKLGLGLELE). A Glycyl lysine isopeptide (Lys-Gly) (interchain with G-Cter in ubiquitin) cross-link involves residue Lys-287.

Belongs to the eukaryotic mitochondrial porin family. As to quaternary structure, monomer, homodimer and higher order oligomers; formation of higher order structures is necessary for scramblase activity. Post-translationally, ubiquitinated by PRKN during mitophagy, leading to its degradation and enhancement of mitophagy. Deubiquitinated by USP30.

The protein localises to the mitochondrion outer membrane. The protein resides in the membrane. It catalyses the reaction chloride(in) = chloride(out). It carries out the reaction K(+)(in) = K(+)(out). The catalysed reaction is a 1,2-diacyl-sn-glycero-3-phospho-L-serine(in) = a 1,2-diacyl-sn-glycero-3-phospho-L-serine(out). The enzyme catalyses a 1,2-diacyl-sn-glycero-3-phosphocholine(in) = a 1,2-diacyl-sn-glycero-3-phosphocholine(out). It catalyses the reaction a 1,2-diacyl-sn-glycero-3-phospho-(1D-myo-inositol)(in) = a 1,2-diacyl-sn-glycero-3-phospho-(1D-myo-inositol)(out). Functionally, non-selective voltage-gated ion channel that mediates the transport of anions and cations through the mitochondrion outer membrane and plasma membrane. The channel adopts an open conformation at zero mV and a closed conformation at both positive and negative potentials. There are two populations of channels; the main that functions in a lower open-state conductance with lower ion selectivity, that switch, in a voltage-dependent manner, from the open to a low-conducting 'closed' state and the other that has a normal ion selectivity in the typical high conductance, 'open' state. Binds various lipids, including the sphingolipid ceramide, the phospholipid phosphatidylcholine, and the sterols cholesterol and oxysterol. Binding of ceramide promotes the mitochondrial outer membrane permeabilization (MOMP) apoptotic pathway. Catalyzes the scrambling of phospholipids across the outer mitochondrial membrane; the mechanism is unrelated to channel activity and is capable of translocating both anionic and zwitterionic phospholipids. This chain is Non-selective voltage-gated ion channel VDAC2, found in Meleagris gallopavo (Wild turkey).